A 363-amino-acid polypeptide reads, in one-letter code: MKNLNKNTKIIVGLSGGVDSSVATLLLLKQGYQVEALFMKNWEEDDKSGYCSVEQDLSDAQKIADKLDVKLHAVNFSADYWNDVFIHFLKEHKKGRTPNPDVLCNQKIKFRVFLEHALSLGADKIATGHYARIAEKNGTYQLKTGLDDSKDQSYFLHLLNQYQLSKSLFPLGEINKIDVRNIAIENGFVTANKKDSTGICFIGERNFSEFLATYLSKQQGDIVDEQGQFIKHHQGLAFYTIGQRKGLKIGGGFGKSGEPWFVADKCIERNELMIVQGNHALLYHQILSASKPHWISTPPTLPLMCSAKIRYRQQSQSCMISQNDNKQIKVVFKQLQRAITPGQSIVFYDNKTCLGGAIIEFRL.

ATP contacts are provided by residues 13-20 and Met-39; that span reads GLSGGVDS. An interaction with target base in tRNA region spans residues 99–101; it reads NPD. Catalysis depends on Cys-104, which acts as the Nucleophile. Cys-104 and Cys-200 are joined by a disulfide. Gly-128 contacts ATP. Positions 150-152 are interaction with tRNA; the sequence is KDQ. The active-site Cysteine persulfide intermediate is the Cys-200. The tract at residues 310 to 311 is interaction with tRNA; it reads RY.

The protein belongs to the MnmA/TRMU family.

Its subcellular location is the cytoplasm. The enzyme catalyses S-sulfanyl-L-cysteinyl-[protein] + uridine(34) in tRNA + AH2 + ATP = 2-thiouridine(34) in tRNA + L-cysteinyl-[protein] + A + AMP + diphosphate + H(+). Catalyzes the 2-thiolation of uridine at the wobble position (U34) of tRNA, leading to the formation of s(2)U34. The polypeptide is tRNA-specific 2-thiouridylase MnmA (Ruthia magnifica subsp. Calyptogena magnifica).